Here is a 438-residue protein sequence, read N- to C-terminus: MSLIPQEIIRRKRDGLSLAPQEIAAFIEALSKDGISEGQAAAFAMAVFFRGMNRDEMVALTLAMRDSGDVLSWRDIGRPVADKHSTGGVGDNVSLMLAPIVAACGLAVPMISGRGLGHTGGTLDKLEAIPGYDVMPDEALFRRTVQSVGCAIIGQTGDLAPADKRLYAIRDVTATVDSIPLITASILSKKLAAGLETLVLDVKVGNGAFMQSLEDARILARALVDVANGAGLPTTALITDMNQPLCDAAGNAVEIVNCLEFLAGGKAGTRLEKVVLSFAAEMLVQARKAATLEEGEALASAALSSGRAMEIFARMVSVLGGPSDFIENPSRYLACAPIILPVPAARSGWLASCATRDLGMVVVELGGGRTKPSDTINPAVGISDILPLGVRVEKGEPIAVVHAASSEDAERAVKRIEDCFGIADNAPEIAASVLERIT.

The protein belongs to the thymidine/pyrimidine-nucleoside phosphorylase family. In terms of assembly, homodimer.

It catalyses the reaction thymidine + phosphate = 2-deoxy-alpha-D-ribose 1-phosphate + thymine. It functions in the pathway pyrimidine metabolism; dTMP biosynthesis via salvage pathway; dTMP from thymine: step 1/2. Functionally, the enzymes which catalyze the reversible phosphorolysis of pyrimidine nucleosides are involved in the degradation of these compounds and in their utilization as carbon and energy sources, or in the rescue of pyrimidine bases for nucleotide synthesis. In Agrobacterium fabrum (strain C58 / ATCC 33970) (Agrobacterium tumefaciens (strain C58)), this protein is Thymidine phosphorylase.